A 52-amino-acid chain; its full sequence is UPF0057 membrane protein At1g57550 (52 aa).

2 helical membrane passes run 4-24 (FLEV…RYGL) and 30-50 (VCLL…IYVL).

This sequence belongs to the UPF0057 (PMP3) family.

Its subcellular location is the membrane. The protein is UPF0057 membrane protein At1g57550 of Arabidopsis thaliana (Mouse-ear cress).